A 171-amino-acid chain; its full sequence is Ribosome maturation factor RimM (171 aa).

A PRC barrel domain is found at 97–170; that stretch reads EGEYYYHEII…LVTIHVMEGL (74 aa).

The protein belongs to the RimM family. As to quaternary structure, binds ribosomal protein uS19.

It is found in the cytoplasm. In terms of biological role, an accessory protein needed during the final step in the assembly of 30S ribosomal subunit, possibly for assembly of the head region. Essential for efficient processing of 16S rRNA. May be needed both before and after RbfA during the maturation of 16S rRNA. It has affinity for free ribosomal 30S subunits but not for 70S ribosomes. This Bacillus cereus (strain ZK / E33L) protein is Ribosome maturation factor RimM.